Here is a 152-residue protein sequence, read N- to C-terminus: Ribonuclease H (152 aa).

Residues 1-142 (MDSKVVIYTD…ADKLAVQGRE (142 aa)) enclose the RNase H type-1 domain. Positions 10, 48, 70, and 134 each coordinate Mg(2+).

Belongs to the RNase H family. Monomer. The cofactor is Mg(2+).

It localises to the cytoplasm. It catalyses the reaction Endonucleolytic cleavage to 5'-phosphomonoester.. Functionally, endonuclease that specifically degrades the RNA of RNA-DNA hybrids. The polypeptide is Ribonuclease H (Rickettsia felis (strain ATCC VR-1525 / URRWXCal2) (Rickettsia azadi)).